A 466-amino-acid polypeptide reads, in one-letter code: Ribulose bisphosphate carboxylase large chain (466 aa).

Lys5 carries the N6,N6,N6-trimethyllysine modification. The substrate site is built by Asn114 and Thr164. The active-site Proton acceptor is the Lys166. Lys168 contacts substrate. Mg(2+) contacts are provided by Lys192, Asp194, and Glu195. Lys192 is subject to N6-carboxylysine. The active-site Proton acceptor is His285. Residues Arg286, His318, and Ser370 each coordinate substrate.

It belongs to the RuBisCO large chain family. Type I subfamily. As to quaternary structure, heterohexadecamer of 8 large chains and 8 small chains; disulfide-linked. The disulfide link is formed within the large subunit homodimers. It depends on Mg(2+) as a cofactor. Post-translationally, the disulfide bond which can form in the large chain dimeric partners within the hexadecamer appears to be associated with oxidative stress and protein turnover.

Its subcellular location is the plastid. The protein resides in the chloroplast. The enzyme catalyses 2 (2R)-3-phosphoglycerate + 2 H(+) = D-ribulose 1,5-bisphosphate + CO2 + H2O. The catalysed reaction is D-ribulose 1,5-bisphosphate + O2 = 2-phosphoglycolate + (2R)-3-phosphoglycerate + 2 H(+). RuBisCO catalyzes two reactions: the carboxylation of D-ribulose 1,5-bisphosphate, the primary event in carbon dioxide fixation, as well as the oxidative fragmentation of the pentose substrate in the photorespiration process. Both reactions occur simultaneously and in competition at the same active site. In Asarum canadense (Wild ginger), this protein is Ribulose bisphosphate carboxylase large chain.